A 353-amino-acid polypeptide reads, in one-letter code: Photosystem II protein D1 (353 aa).

An N-acetylthreonine modification is found at Thr-2. Position 2 is a phosphothreonine (Thr-2). The next 3 membrane-spanning stretches (helical) occupy residues 29–46 (YIGWFGVLMIPTLLTATS), 118–133 (HFLLGVACYMGREWEL), and 142–156 (WIAVAYSAPVAAAAA). His-118 lines the chlorophyll a pocket. Residue Tyr-126 coordinates pheophytin a. The [CaMn4O5] cluster site is built by Asp-170 and Glu-189. Residues 197–218 (FHMLGVAGVFGGSLFSAMHGSL) form a helical membrane-spanning segment. His-198 serves as a coordination point for chlorophyll a. A quinone contacts are provided by residues His-215 and 264-265 (SF). Residue His-215 coordinates Fe cation. Position 272 (His-272) interacts with Fe cation. A helical transmembrane segment spans residues 274-288 (FLAAWPVVGIWFTAL). [CaMn4O5] cluster is bound by residues His-332, Glu-333, Asp-342, and Ala-344. Positions 345–353 (AVEAPSTNG) are excised as a propeptide.

The protein belongs to the reaction center PufL/M/PsbA/D family. As to quaternary structure, PSII is composed of 1 copy each of membrane proteins PsbA, PsbB, PsbC, PsbD, PsbE, PsbF, PsbH, PsbI, PsbJ, PsbK, PsbL, PsbM, PsbT, PsbX, PsbY, PsbZ, Psb30/Ycf12, at least 3 peripheral proteins of the oxygen-evolving complex and a large number of cofactors. It forms dimeric complexes. The cofactor is The D1/D2 heterodimer binds P680, chlorophylls that are the primary electron donor of PSII, and subsequent electron acceptors. It shares a non-heme iron and each subunit binds pheophytin, quinone, additional chlorophylls, carotenoids and lipids. D1 provides most of the ligands for the Mn4-Ca-O5 cluster of the oxygen-evolving complex (OEC). There is also a Cl(-1) ion associated with D1 and D2, which is required for oxygen evolution. The PSII complex binds additional chlorophylls, carotenoids and specific lipids.. Post-translationally, tyr-161 forms a radical intermediate that is referred to as redox-active TyrZ, YZ or Y-Z. C-terminally processed by CTPA; processing is essential to allow assembly of the oxygen-evolving complex and thus photosynthetic growth.

The protein resides in the plastid. It is found in the chloroplast thylakoid membrane. It catalyses the reaction 2 a plastoquinone + 4 hnu + 2 H2O = 2 a plastoquinol + O2. In terms of biological role, photosystem II (PSII) is a light-driven water:plastoquinone oxidoreductase that uses light energy to abstract electrons from H(2)O, generating O(2) and a proton gradient subsequently used for ATP formation. It consists of a core antenna complex that captures photons, and an electron transfer chain that converts photonic excitation into a charge separation. The D1/D2 (PsbA/PsbD) reaction center heterodimer binds P680, the primary electron donor of PSII as well as several subsequent electron acceptors. This chain is Photosystem II protein D1, found in Panax ginseng (Korean ginseng).